The chain runs to 294 residues: Probable enoyl-CoA hydratase 2 (294 aa).

(3R)-3-hydroxydecanoyl-CoA-binding positions include 84-85 (HG), Lys-113, 190-195 (DLNPLH), Gly-213, and Phe-243. Residues 165–269 (DRAPDAISKQ…INPTTILFQS (105 aa)) enclose the MaoC-like domain. A Microbody targeting signal motif is present at residues 292 to 294 (GSL).

Belongs to the short-chain dehydrogenases/reductases (SDR) family.

It is found in the peroxisome. The enzyme catalyses a (3R)-3-hydroxyacyl-CoA = a (2E)-enoyl-CoA + H2O. This Dictyostelium discoideum (Social amoeba) protein is Probable enoyl-CoA hydratase 2 (mfeB).